The following is a 270-amino-acid chain: Nuclease P1 (270 aa).

A divalent metal cation contacts are provided by Trp1, His6, His15, Asp45, and His60. Trp1–His6 lines the substrate pocket. Residues Asp45–Ser51, His60–Asp63, and Asn73–Arg78 each bind substrate. 2 disulfides stabilise this stretch: Cys72/Cys217 and Cys80/Cys85. Asn92 is a glycosylation site (N-linked (GlcNAc...) asparagine). Residues His116, Asp120, and His126 each coordinate a divalent metal cation. The substrate binding stretch occupies residues His116–His164. Asn138 carries an N-linked (GlcNAc...) asparagine glycan. A divalent metal cation contacts are provided by His149 and Asp153. Asn184 and Asn197 each carry an N-linked (GlcNAc...) asparagine glycan.

The protein belongs to the nuclease type I family. It depends on Zn(2+) as a cofactor.

The protein resides in the secreted. The catalysed reaction is Endonucleolytic cleavage to 5'-phosphomononucleotide and 5'-phosphooligonucleotide end-products.. Functionally, hydrolyzes only single-stranded DNA and RNA without apparent specificity for bases. The chain is Nuclease P1 from Penicillium citrinum.